Reading from the N-terminus, the 691-residue chain is Two-component response regulator ORR21 (691 aa).

Residues 17–132 enclose the Response regulatory domain; it reads KVLVVDDDPT…ELKNIWQHVI (116 aa). Position 68 is a 4-aspartylphosphate (Asp-68). Residues 139–155 show a composition bias toward basic and acidic residues; the sequence is NKEHEHSGSLDDTDRTR. 2 disordered regions span residues 139–204 and 616–647; these read NKEH…KKPR and SHPGSSSSSFQSSNVALGKLPDQGRGKNHGFV. Residues 199–258 constitute a DNA-binding region (myb-like GARP); the sequence is TSKKPRVVWSVELHQQFVNAVNHLGIDKAVPKKILELMNVPGLTRENVASHLQKFRLYLK. The span at 616-628 shows a compositional bias: low complexity; the sequence is SHPGSSSSSFQSS.

This sequence belongs to the ARR family. Type-B subfamily. In terms of processing, two-component system major event consists of a His-to-Asp phosphorelay between a sensor histidine kinase (HK) and a response regulator (RR). In plants, the His-to-Asp phosphorelay involves an additional intermediate named Histidine-containing phosphotransfer protein (HPt). This multistep phosphorelay consists of a His-Asp-His-Asp sequential transfer of a phosphate group between first a His and an Asp of the HK protein, followed by the transfer to a conserved His of the HPt protein and finally the transfer to an Asp in the receiver domain of the RR protein.

The protein resides in the nucleus. Its function is as follows. Transcriptional activator that binds specific DNA sequence. Functions as a response regulator involved in His-to-Asp phosphorelay signal transduction system. Phosphorylation of the Asp residue in the receiver domain activates the ability of the protein to promote the transcription of target genes. May directly activate some type-A response regulators in response to cytokinins. The polypeptide is Two-component response regulator ORR21 (Oryza sativa subsp. indica (Rice)).